The primary structure comprises 334 residues: Glycerol-1-phosphate dehydrogenase [NAD(P)+] (334 aa).

NAD(+) is bound by residues 77–81 (GRPID) and 99–102 (TTAS). Substrate is bound at residue Asp-104. Residue Ser-108 coordinates NAD(+). A substrate-binding site is contributed by Asp-147. The Zn(2+) site is built by Asp-147 and His-225. A substrate-binding site is contributed by His-229. Position 246 (His-246) interacts with Zn(2+).

Belongs to the glycerol-1-phosphate dehydrogenase family. Requires Zn(2+) as cofactor.

The protein resides in the cytoplasm. It carries out the reaction sn-glycerol 1-phosphate + NAD(+) = dihydroxyacetone phosphate + NADH + H(+). The enzyme catalyses sn-glycerol 1-phosphate + NADP(+) = dihydroxyacetone phosphate + NADPH + H(+). It functions in the pathway membrane lipid metabolism; glycerophospholipid metabolism. In terms of biological role, catalyzes the NAD(P)H-dependent reduction of dihydroxyacetonephosphate (DHAP or glycerone phosphate) to glycerol 1-phosphate (G1P). The G1P thus generated is used as the glycerophosphate backbone of phospholipids in the cellular membranes of Archaea. In Methanococcus maripaludis (strain C7 / ATCC BAA-1331), this protein is Glycerol-1-phosphate dehydrogenase [NAD(P)+].